We begin with the raw amino-acid sequence, 3387 residues long: Genome polyprotein (3387 aa).

Over methionine 1–serine 100 the chain is Cytoplasmic. Positions leucine 36–leucine 71 are hydrophobic; homodimerization of capsid protein C. A propeptide spans serine 100–alanine 113 (ER anchor for the capsid protein C, removed in mature form by serine protease NS3). A helical membrane pass occupies residues threonine 101 to serine 117. Topologically, residues threonine 118–glutamate 237 are extracellular. N-linked (GlcNAc...) asparagine; by host glycosylation occurs at asparagine 182. Residues serine 238 to glycine 258 form a helical membrane-spanning segment. Residues glutamine 259–threonine 265 lie on the Cytoplasmic side of the membrane. A helical membrane pass occupies residues valine 266 to glycine 279. The Extracellular portion of the chain corresponds to methionine 280–threonine 725. Disulfide bonds link cysteine 282-cysteine 309, cysteine 339-cysteine 400, cysteine 353-cysteine 384, and cysteine 371-cysteine 395. Asparagine 346 carries an N-linked (GlcNAc...) asparagine; by host glycan. Residues aspartate 377 to glycine 390 form a fusion peptide region. N-linked (GlcNAc...) asparagine; by host glycosylation occurs at asparagine 432. 2 cysteine pairs are disulfide-bonded: cysteine 464-cysteine 564 and cysteine 581-cysteine 612. The chain crosses the membrane as a helical span at residues methionine 726–glycine 746. Over threonine 747 to asparagine 751 the chain is Cytoplasmic. Residues threonine 752–valine 772 form a helical membrane-spanning segment. Residues glutamine 773–isoleucine 1194 are Extracellular-facing. 6 disulfide bridges follow: cysteine 778–cysteine 789, cysteine 829–cysteine 917, cysteine 953–cysteine 997, cysteine 1054–cysteine 1103, cysteine 1065–cysteine 1087, and cysteine 1086–cysteine 1090. Asparagine 904 and asparagine 981 each carry an N-linked (GlcNAc...) asparagine; by host glycan. Residues glycine 1195–leucine 1218 traverse the membrane as a helical segment. Topologically, residues arginine 1219–arginine 1224 are lumenal. A helical transmembrane segment spans residues glutamate 1225 to histidine 1243. Residues aspartate 1244–asparagine 1267 are Cytoplasmic-facing. A helical membrane pass occupies residues threonine 1268–methionine 1288. A topological domain (lumenal) is located at residue alanine 1289. A helical transmembrane segment spans residues tryptophan 1290 to threonine 1308. Over serine 1309–histidine 1316 the chain is Lumenal. Residues tryptophan 1317–leucine 1337 form a helical membrane-spanning segment. The Cytoplasmic portion of the chain corresponds to methionine 1338–serine 1345. Residues tryptophan 1346 to leucine 1366 form a helical membrane-spanning segment. Residues lysine 1367–aspartate 1369 are Lumenal-facing. The chain crosses the membrane as a helical span at residues valine 1370 to glycine 1390. Topologically, residues serine 1391–asparagine 1437 are cytoplasmic. Positions leucine 1397–threonine 1436 are interacts with and activates NS3 protease. The helical intramembrane region spans methionine 1438–isoleucine 1458. At proline 1459–serine 2143 the chain is on the cytoplasmic side. A Peptidase S7 domain is found at serine 1475–valine 1652. Catalysis depends on charge relay system; for serine protease NS3 activity residues histidine 1525, aspartate 1549, and serine 1609. The 157-residue stretch at glutamate 1654–glutamate 1810 folds into the Helicase ATP-binding domain. An important for RNA-binding region spans residues arginine 1658–arginine 1661. Leucine 1667–threonine 1674 is a binding site for ATP. The DEAH box motif lies at aspartate 1758–histidine 1761. The region spanning threonine 1820–arginine 1987 is the Helicase C-terminal domain. The residue at position 1862 (lysine 1862) is an N6-acetyllysine; by host. A helical transmembrane segment spans residues leucine 2144 to phenylalanine 2164. Residues methionine 2165–glycine 2169 lie on the Lumenal side of the membrane. An intramembrane region (helical) is located at residues isoleucine 2170–alanine 2190. Glutamate 2191 is a topological domain (lumenal). A helical membrane pass occupies residues isoleucine 2192–isoleucine 2212. Residues proline 2213–glutamine 2225 lie on the Cytoplasmic side of the membrane. A helical membrane pass occupies residues leucine 2226 to glycine 2246. The Lumenal segment spans residues leucine 2247 to aspartate 2270. Positions leucine 2271–leucine 2291 form an intramembrane region, helical. Over arginine 2292 to asparagine 2301 the chain is Lumenal. N-linked (GlcNAc...) asparagine; by host glycosylation is found at asparagine 2297 and asparagine 2301. An intramembrane region (helical) is located at residues leucine 2302 to proline 2322. At leucine 2323–proline 2343 the chain is on the lumenal side. A helical transmembrane segment spans residues threonine 2344–leucine 2364. Over glutamine 2365–glutamine 2409 the chain is Cytoplasmic. Residues valine 2410 to cysteine 2430 form a helical membrane-spanning segment. Residues glutamate 2431–threonine 2455 are Lumenal-facing. Asparagine 2453 carries N-linked (GlcNAc...) asparagine; by host glycosylation. A helical membrane pass occupies residues isoleucine 2456–phenylalanine 2476. At serine 2477–leucine 3387 the chain is on the cytoplasmic side. Residues threonine 2489 to serine 2751 form the mRNA cap 0-1 NS5-type MT domain. Serine 2543 serves as a coordination point for S-adenosyl-L-methionine. Residue serine 2543 is modified to Phosphoserine. Residue lysine 2548 is the For 2'-O-MTase activity of the active site. The SUMO-interacting motif motif lies at valine 2564–leucine 2567. Residues glycine 2573, tryptophan 2574, threonine 2591, lysine 2592, aspartate 2618, and valine 2619 each coordinate S-adenosyl-L-methionine. The active-site For 2'-O-MTase activity is aspartate 2633. Residue isoleucine 2634 participates in S-adenosyl-L-methionine binding. Residues lysine 2668 and glutamate 2704 each act as for 2'-O-MTase activity in the active site. An S-adenosyl-L-methionine-binding site is contributed by tyrosine 2706. Zn(2+) is bound by residues glutamate 2925, histidine 2929, cysteine 2934, and cysteine 2937. Residues leucine 3016 to leucine 3166 form the RdRp catalytic domain. Zn(2+) is bound by residues histidine 3200, cysteine 3216, and cysteine 3335.

This sequence in the N-terminal section; belongs to the class I-like SAM-binding methyltransferase superfamily. mRNA cap 0-1 NS5-type methyltransferase family. In terms of assembly, homodimer. Interacts (via N-terminus) with host EXOC1 (via C-terminus); this interaction results in EXOC1 degradation through the proteasome degradation pathway. As to quaternary structure, forms heterodimers with envelope protein E in the endoplasmic reticulum and Golgi. Homodimer; in the endoplasmic reticulum and Golgi. Interacts with protein prM. Interacts with non-structural protein 1. In terms of assembly, homodimer; Homohexamer when secreted. Interacts with envelope protein E. As to quaternary structure, interacts (via N-terminus) with serine protease NS3. Forms a heterodimer with serine protease NS3. May form homooligomers. In terms of assembly, forms a heterodimer with NS2B. Interacts with NS4B. Interacts with unphosphorylated RNA-directed RNA polymerase NS5; this interaction stimulates RNA-directed RNA polymerase NS5 guanylyltransferase activity. Interacts with host SHFL. As to quaternary structure, interacts with host MAVS; this interaction inhibits the synthesis of IFN-beta. Interacts with host SHFL. Interacts with host AUP1; the interaction occurs in the presence of Dengue virus NS4B and induces lipophagy which facilitates production of virus progeny particles. Interacts with serine protease NS3. In terms of assembly, homodimer. Interacts with host STAT2; this interaction inhibits the phosphorylation of the latter, and, when all viral proteins are present (polyprotein), targets STAT2 for degradation. Interacts with serine protease NS3. Interacts with host PAF1 complex; the interaction may prevent the recruitment of the PAF1 complex to interferon-responsive genes, and thus reduces the immune response. In terms of processing, specific enzymatic cleavages in vivo yield mature proteins. Cleavages in the lumen of endoplasmic reticulum are performed by host signal peptidase, whereas cleavages in the cytoplasmic side are performed by serine protease NS3. Signal cleavage at the 2K-4B site requires a prior NS3 protease-mediated cleavage at the 4A-2K site. Post-translationally, cleaved in post-Golgi vesicles by a host furin, releasing the mature small envelope protein M, and peptide pr. This cleavage is incomplete as up to 30% of viral particles still carry uncleaved prM. N-glycosylated. In terms of processing, N-glycosylated. The excreted form is glycosylated and this is required for efficient secretion of the protein from infected cells. Post-translationally, acetylated by host KAT5. Acetylation modulates NS3 RNA-binding and unwinding activities and plays an important positive role for viral replication. Sumoylation of RNA-directed RNA polymerase NS5 increases NS5 protein stability allowing proper viral RNA replication. In terms of processing, phosphorylated on serines residues. This phosphorylation may trigger NS5 nuclear localization.

The protein localises to the virion. It is found in the host nucleus. Its subcellular location is the host cytoplasm. The protein resides in the host perinuclear region. It localises to the secreted. The protein localises to the virion membrane. It is found in the host endoplasmic reticulum membrane. Its subcellular location is the host mitochondrion. The enzyme catalyses Selective hydrolysis of -Xaa-Xaa-|-Yaa- bonds in which each of the Xaa can be either Arg or Lys and Yaa can be either Ser or Ala.. It carries out the reaction RNA(n) + a ribonucleoside 5'-triphosphate = RNA(n+1) + diphosphate. It catalyses the reaction a ribonucleoside 5'-triphosphate + H2O = a ribonucleoside 5'-diphosphate + phosphate + H(+). The catalysed reaction is ATP + H2O = ADP + phosphate + H(+). The enzyme catalyses a 5'-end (5'-triphosphoguanosine)-ribonucleoside in mRNA + S-adenosyl-L-methionine = a 5'-end (N(7)-methyl 5'-triphosphoguanosine)-ribonucleoside in mRNA + S-adenosyl-L-homocysteine. It carries out the reaction a 5'-end (N(7)-methyl 5'-triphosphoguanosine)-ribonucleoside in mRNA + S-adenosyl-L-methionine = a 5'-end (N(7)-methyl 5'-triphosphoguanosine)-(2'-O-methyl-ribonucleoside) in mRNA + S-adenosyl-L-homocysteine + H(+). Its function is as follows. Plays a role in virus budding by binding to the cell membrane and gathering the viral RNA into a nucleocapsid that forms the core of a mature virus particle. During virus entry, may induce genome penetration into the host cytoplasm after hemifusion induced by the surface proteins. Can migrate to the cell nucleus where it modulates host functions. Overcomes the anti-viral effects of host EXOC1 by sequestering and degrading the latter through the proteasome degradation pathway. Functionally, regulates the ATPase activity of the NS3 helicase activity. NS4A allows NS3 helicase to conserve energy during unwinding. Plays a role in the inhibition of the host innate immune response. Interacts with host MAVS and thereby prevents the interaction between RIGI and MAVS. In turn, IFN-beta production is impaired. Interacts with host AUP1 which mediates induction of lipophagy in host cells and facilitates production of virus progeny particles. In terms of biological role, inhibits RNA silencing by interfering with host Dicer. Prevents premature fusion activity of envelope proteins in trans-Golgi by binding to envelope protein E at pH6.0. After virion release in extracellular space, gets dissociated from E dimers. Its function is as follows. Acts as a chaperone for envelope protein E during intracellular virion assembly by masking and inactivating envelope protein E fusion peptide. prM is the only viral peptide matured by host furin in the trans-Golgi network probably to avoid catastrophic activation of the viral fusion activity in acidic Golgi compartment prior to virion release. prM-E cleavage is inefficient, and many virions are only partially matured. These uncleaved prM would play a role in immune evasion. Functionally, may play a role in virus budding. Exerts cytotoxic effects by activating a mitochondrial apoptotic pathway through M ectodomain. May display a viroporin activity. In terms of biological role, binds to host cell surface receptor and mediates fusion between viral and cellular membranes. Envelope protein is synthesized in the endoplasmic reticulum in the form of heterodimer with protein prM. They play a role in virion budding in the ER, and the newly formed immature particle is covered with 60 spikes composed of heterodimer between precursor prM and envelope protein E. The virion is transported to the Golgi apparatus where the low pH causes dissociation of PrM-E heterodimers and formation of E homodimers. prM-E cleavage is inefficient, and many virions are only partially matured. These uncleaved prM would play a role in immune evasion. Involved in immune evasion, pathogenesis and viral replication. Once cleaved off the polyprotein, is targeted to three destinations: the viral replication cycle, the plasma membrane and the extracellular compartment. Essential for viral replication. Required for formation of the replication complex and recruitment of other non-structural proteins to the ER-derived membrane structures. Excreted as a hexameric lipoparticle that plays a role against host immune response. Antagonizing the complement function. Binds to the host macrophages and dendritic cells. Inhibits signal transduction originating from Toll-like receptor 3 (TLR3). Its function is as follows. Disrupts the host endothelial glycocalyx layer of host pulmonary microvascular endothelial cells, inducing degradation of sialic acid and shedding of heparan sulfate proteoglycans. NS1 induces expression of sialidases, heparanase, and activates cathepsin L, which activates heparanase via enzymatic cleavage. These effects are probably linked to the endothelial hyperpermeability observed in severe dengue disease. Functionally, component of the viral RNA replication complex that functions in virion assembly and antagonizes the host immune response. In terms of biological role, required cofactor for the serine protease function of NS3. May have membrane-destabilizing activity and form viroporins. Displays three enzymatic activities: serine protease, NTPase and RNA helicase. NS3 serine protease, in association with NS2B, performs its autocleavage and cleaves the polyprotein at dibasic sites in the cytoplasm: C-prM, NS2A-NS2B, NS2B-NS3, NS3-NS4A, NS4A-2K and NS4B-NS5. NS3 RNA helicase binds RNA and unwinds dsRNA in the 3' to 5' direction. Its function is as follows. Functions as a signal peptide for NS4B and is required for the interferon antagonism activity of the latter. Functionally, induces the formation of ER-derived membrane vesicles where the viral replication takes place. Inhibits interferon (IFN)-induced host STAT1 phosphorylation and nuclear translocation, thereby preventing the establishment of cellular antiviral state by blocking the IFN-alpha/beta pathway. In terms of biological role, replicates the viral (+) and (-) RNA genome, and performs the capping of genomes in the cytoplasm. NS5 methylates viral RNA cap at guanine N-7 and ribose 2'-O positions. Besides its role in RNA genome replication, also prevents the establishment of cellular antiviral state by blocking the interferon-alpha/beta (IFN-alpha/beta) signaling pathway. Inhibits host TYK2 and STAT2 phosphorylation, thereby preventing activation of JAK-STAT signaling pathway. May reduce immune responses by preventing the recruitment of the host PAF1 complex to interferon-responsive genes. The polypeptide is Genome polyprotein (Dengue virus type 4 (strain Dominica/814669/1981) (DENV-4)).